Consider the following 413-residue polypeptide: Putative competence-damage inducible protein (413 aa).

This sequence belongs to the CinA family.

The polypeptide is Putative competence-damage inducible protein (Halothermothrix orenii (strain H 168 / OCM 544 / DSM 9562)).